The following is a 258-amino-acid chain: Type III pantothenate kinase (258 aa).

Residue 6–13 coordinates ATP; that stretch reads DVGNTQIF. A substrate-binding site is contributed by 107–110; sequence GADR. D109 functions as the Proton acceptor in the catalytic mechanism. Residue D130 coordinates K(+). T133 contacts ATP. T185 contributes to the substrate binding site.

This sequence belongs to the type III pantothenate kinase family. As to quaternary structure, homodimer. It depends on NH4(+) as a cofactor. K(+) serves as cofactor.

The protein localises to the cytoplasm. It catalyses the reaction (R)-pantothenate + ATP = (R)-4'-phosphopantothenate + ADP + H(+). It participates in cofactor biosynthesis; coenzyme A biosynthesis; CoA from (R)-pantothenate: step 1/5. In terms of biological role, catalyzes the phosphorylation of pantothenate (Pan), the first step in CoA biosynthesis. This Elusimicrobium minutum (strain Pei191) protein is Type III pantothenate kinase.